We begin with the raw amino-acid sequence, 183 residues long: ATP synthase subunit b 2 (183 aa).

A helical transmembrane segment spans residues 27-47; that stretch reads PSFYAFLALLIFFGLLLHMGV.

This sequence belongs to the ATPase B chain family. F-type ATPases have 2 components, F(1) - the catalytic core - and F(0) - the membrane proton channel. F(1) has five subunits: alpha(3), beta(3), gamma(1), delta(1), epsilon(1). F(0) has three main subunits: a(1), b(2) and c(10-14). The alpha and beta chains form an alternating ring which encloses part of the gamma chain. F(1) is attached to F(0) by a central stalk formed by the gamma and epsilon chains, while a peripheral stalk is formed by the delta and b chains.

Its subcellular location is the cell inner membrane. Functionally, f(1)F(0) ATP synthase produces ATP from ADP in the presence of a proton or sodium gradient. F-type ATPases consist of two structural domains, F(1) containing the extramembraneous catalytic core and F(0) containing the membrane proton channel, linked together by a central stalk and a peripheral stalk. During catalysis, ATP synthesis in the catalytic domain of F(1) is coupled via a rotary mechanism of the central stalk subunits to proton translocation. Component of the F(0) channel, it forms part of the peripheral stalk, linking F(1) to F(0). The sequence is that of ATP synthase subunit b 2 from Maricaulis maris (strain MCS10) (Caulobacter maris).